A 180-amino-acid chain; its full sequence is ATP synthase subunit delta (180 aa).

It belongs to the ATPase delta chain family. F-type ATPases have 2 components, F(1) - the catalytic core - and F(0) - the membrane proton channel. F(1) has five subunits: alpha(3), beta(3), gamma(1), delta(1), epsilon(1). F(0) has three main subunits: a(1), b(2) and c(10-14). The alpha and beta chains form an alternating ring which encloses part of the gamma chain. F(1) is attached to F(0) by a central stalk formed by the gamma and epsilon chains, while a peripheral stalk is formed by the delta and b chains.

It localises to the cell membrane. In terms of biological role, f(1)F(0) ATP synthase produces ATP from ADP in the presence of a proton or sodium gradient. F-type ATPases consist of two structural domains, F(1) containing the extramembraneous catalytic core and F(0) containing the membrane proton channel, linked together by a central stalk and a peripheral stalk. During catalysis, ATP synthesis in the catalytic domain of F(1) is coupled via a rotary mechanism of the central stalk subunits to proton translocation. Functionally, this protein is part of the stalk that links CF(0) to CF(1). It either transmits conformational changes from CF(0) to CF(1) or is implicated in proton conduction. In Dehalococcoides mccartyi (strain ATCC BAA-2100 / JCM 16839 / KCTC 5957 / BAV1), this protein is ATP synthase subunit delta.